Consider the following 375-residue polypeptide: Histidine biosynthesis bifunctional protein HisB (375 aa).

The segment at 1-168 (MTPILFVDRD…GIAHELADAP (168 aa)) is histidinol-phosphatase. Aspartate 8 serves as the catalytic Nucleophile. Aspartate 8, aspartate 10, and aspartate 128 together coordinate Mg(2+). Catalysis depends on aspartate 10, which acts as the Proton donor. Positions 169–375 (RRALVQRNTK…TALPTTKGTL (207 aa)) are imidazoleglycerol-phosphate dehydratase.

It in the N-terminal section; belongs to the histidinol-phosphatase family. The protein in the C-terminal section; belongs to the imidazoleglycerol-phosphate dehydratase family. It depends on Mg(2+) as a cofactor.

The protein resides in the cytoplasm. It carries out the reaction D-erythro-1-(imidazol-4-yl)glycerol 3-phosphate = 3-(imidazol-4-yl)-2-oxopropyl phosphate + H2O. It catalyses the reaction L-histidinol phosphate + H2O = L-histidinol + phosphate. It functions in the pathway amino-acid biosynthesis; L-histidine biosynthesis; L-histidine from 5-phospho-alpha-D-ribose 1-diphosphate: step 6/9. The protein operates within amino-acid biosynthesis; L-histidine biosynthesis; L-histidine from 5-phospho-alpha-D-ribose 1-diphosphate: step 8/9. This is Histidine biosynthesis bifunctional protein HisB from Xanthomonas axonopodis pv. citri (strain 306).